Reading from the N-terminus, the 406-residue chain is Phosphopentomutase (406 aa).

Residues Asp10, Asp305, His310, Asp346, His347, and His358 each coordinate Mn(2+).

This sequence belongs to the phosphopentomutase family. Requires Mn(2+) as cofactor.

It localises to the cytoplasm. It carries out the reaction 2-deoxy-alpha-D-ribose 1-phosphate = 2-deoxy-D-ribose 5-phosphate. The enzyme catalyses alpha-D-ribose 1-phosphate = D-ribose 5-phosphate. Its pathway is carbohydrate degradation; 2-deoxy-D-ribose 1-phosphate degradation; D-glyceraldehyde 3-phosphate and acetaldehyde from 2-deoxy-alpha-D-ribose 1-phosphate: step 1/2. Its function is as follows. Isomerase that catalyzes the conversion of deoxy-ribose 1-phosphate (dRib-1-P) and ribose 1-phosphate (Rib-1-P) to deoxy-ribose 5-phosphate (dRib-5-P) and ribose 5-phosphate (Rib-5-P), respectively. The sequence is that of Phosphopentomutase from Methylobacterium radiotolerans (strain ATCC 27329 / DSM 1819 / JCM 2831 / NBRC 15690 / NCIMB 10815 / 0-1).